Reading from the N-terminus, the 112-residue chain is uncharacterized protein (112 aa).

The N-terminal 21 residues, 1 to 21, are a transit peptide targeting the mitochondrion; that stretch reads MYLSAQLMRTVTASHLTLRAL.

It localises to the mitochondrion. This is an uncharacterized protein from Saccharomyces cerevisiae (strain ATCC 204508 / S288c) (Baker's yeast).